Reading from the N-terminus, the 353-residue chain is Trans-enoyl reductase eqxC (353 aa).

An NADP(+)-binding site is contributed by 45-48 (VDTK). Substrate is bound at residue 131-138 (ISFMTTGL). Residues 166-169 (SSAT), 189-192 (SPRN), tyrosine 207, and 254-255 (LE) each bind NADP(+). 275–279 (GPQML) is a substrate binding site. 344–345 (IS) contacts NADP(+).

Belongs to the zinc-containing alcohol dehydrogenase family. In terms of assembly, monomer.

The catalysed reaction is L-serine + 7 malonyl-CoA + acetyl-CoA + 2 S-adenosyl-L-methionine + ATP + 8 NADPH + 11 H(+) = (5S)-3-[(2E,6R,8E,10E,12E)-2,6-dimethyltetradeca-2,8,10,12-tetraenoyl]-5-(hydroxymethyl)pyrrolidine-2,4-dione + AMP + 2 S-adenosyl-L-homocysteine + 7 CO2 + diphosphate + 8 NADP(+) + 8 CoA + 6 H2O. It functions in the pathway mycotoxin biosynthesis. Trans-enoyl reductase; part of the gene cluster that mediates the biosynthesis of equisetin, a trans-fused decalin-containing tetramic acid with antimicrobial activity. The PKS module of eqxS together with the enoylreductase eqxC catalyze the formation of the polyketide unit which is then conjugated to L-serine by the condensation domain of the eqxS NRPS module. Activity of the Dieckmann cyclase domain (RED) results in release of the Dieckmann product intermediate. Diels-Alderase eqx3 is involved in endo-selective Diels-Alder cycloaddition to form the decalin ring, leading to the production of N-desmethylequisetin also called trichosetin. Subsequent N-methylation is carried out by eqxD to give equisetin. In Fusarium heterosporum, this protein is Trans-enoyl reductase eqxC.